The primary structure comprises 224 residues: Large ribosomal subunit protein uL1 (224 aa).

This sequence belongs to the universal ribosomal protein uL1 family. Part of the 50S ribosomal subunit.

Binds directly to 23S rRNA. The L1 stalk is quite mobile in the ribosome, and is involved in E site tRNA release. Functionally, protein L1 is also a translational repressor protein, it controls the translation of the L11 operon by binding to its mRNA. The chain is Large ribosomal subunit protein uL1 from Borrelia duttonii (strain Ly).